Here is an 85-residue protein sequence, read N- to C-terminus: Sec-independent protein translocase protein TatA (85 aa).

A helical transmembrane segment spans residues 7-27 (VFGSLGWTEILLILFIALLLF). The tract at residues 50–85 (LTGESDDSSQQISQEQERSVPKEETKTSKSKKSKSA) is disordered. The segment covering 64–76 (EQERSVPKEETKT) has biased composition (basic and acidic residues).

Belongs to the TatA/E family. In terms of assembly, forms a complex with TatC.

It is found in the cell inner membrane. Functionally, part of the twin-arginine translocation (Tat) system that transports large folded proteins containing a characteristic twin-arginine motif in their signal peptide across membranes. TatA could form the protein-conducting channel of the Tat system. The polypeptide is Sec-independent protein translocase protein TatA (Leptospira interrogans serogroup Icterohaemorrhagiae serovar Lai (strain 56601)).